Here is a 336-residue protein sequence, read N- to C-terminus: HTH-type transcriptional repressor PurR (336 aa).

An HTH lacI-type domain is found at 2–56; sequence ATIKDVARLAGVSTTTVSHVINKTRFVAETTQEKVMEAVKQLNYAPSAVARSLKC. Positions 4 to 23 form a DNA-binding region, H-T-H motif; that stretch reads IKDVARLAGVSTTTVSHVIN. Residues 48-56 mediate DNA binding; sequence SAVARSLKC. Positions 73, 189, 220, and 274 each coordinate hypoxanthine.

As to quaternary structure, homodimer.

It participates in purine metabolism; purine nucleotide biosynthesis [regulation]. Its function is as follows. Is the main repressor of the genes involved in the de novo synthesis of purine nucleotides, regulating purB, purC, purEK, purF, purHD, purL, purMN and guaBA expression. PurR is allosterically activated to bind its cognate DNA by binding the purine corepressors, hypoxanthine or guanine, thereby effecting transcription repression. This chain is HTH-type transcriptional repressor PurR, found in Vibrio cholerae serotype O1 (strain ATCC 39315 / El Tor Inaba N16961).